Reading from the N-terminus, the 369-residue chain is MMPASNPKKNSSERRIVFHVDMDSFFASVEVRERPELKNLPVIVGSDPKGGSGRGVVSTCSYEARKYGIHSAMPISQAYRFCPDAVFLPVNMKLYAGVSAGVMEILRGFAEKFQQVSVDEAYLIPGSGVRNFEEAALYALRIKDEVQRQQKITCSVGVGPNKLVSKIASGFQKPDGLTVVRPEDVRDFLFPLPVSRIPGVGEKTEETLKKMGINRVEELANCDVQMLSEKLGKMGFRLKQLANGLDFEELVEKESVKSISRHGTFAEDTDDPVKVSGSLDLLIESVHGSLMKHSFLFKTITLTVRFEDFSTYTRSRTLSIWTSDVFVIKRTAMQLLSEFTGRRKFRLVGVGVTKLRERDERQTLITDFP.

Residues 17–201 (VFHVDMDSFF…LPVSRIPGVG (185 aa)) form the UmuC domain. The Mg(2+) site is built by Asp21 and Asp119. The active site involves Glu120.

Belongs to the DNA polymerase type-Y family. Monomer. Mg(2+) is required as a cofactor.

The protein resides in the cytoplasm. The catalysed reaction is DNA(n) + a 2'-deoxyribonucleoside 5'-triphosphate = DNA(n+1) + diphosphate. Poorly processive, error-prone DNA polymerase involved in untargeted mutagenesis. Copies undamaged DNA at stalled replication forks, which arise in vivo from mismatched or misaligned primer ends. These misaligned primers can be extended by PolIV. Exhibits no 3'-5' exonuclease (proofreading) activity. May be involved in translesional synthesis. In Methanosarcina mazei (strain ATCC BAA-159 / DSM 3647 / Goe1 / Go1 / JCM 11833 / OCM 88) (Methanosarcina frisia), this protein is DNA polymerase IV 2 (dbh2).